The primary structure comprises 291 residues: MFSGSIPALVTPFRDGAFDEKLFRGFVDWQIAEGSSALVPCGTTGESATMSIEEHNHVVRVCIEQAQGRVPVIAGCGSNDTAVALEHMKAAQAAGADAALVVLPYYNRPNQDGLIAHFRHLTDNCTLPIIVYNVPARTVTDILPETLGALAGIKTIVGIKDASGKVERVSAQRQHCGPDFCQLSGNDDMALGFMAMGGVGCISVTANVAPGLCAEFQTACADGRWADALALQDKLFPLHAALFSDASPGPVKYALTRTYRDFPADLRLPMTWPSEASRAAVDAALAHAGIA.

Threonine 44 lines the pyruvate pocket. The active-site Proton donor/acceptor is tyrosine 132. Lysine 160 (schiff-base intermediate with substrate) is an active-site residue. Isoleucine 202 contacts pyruvate.

Belongs to the DapA family. In terms of assembly, homotetramer; dimer of dimers.

It is found in the cytoplasm. The enzyme catalyses L-aspartate 4-semialdehyde + pyruvate = (2S,4S)-4-hydroxy-2,3,4,5-tetrahydrodipicolinate + H2O + H(+). It functions in the pathway amino-acid biosynthesis; L-lysine biosynthesis via DAP pathway; (S)-tetrahydrodipicolinate from L-aspartate: step 3/4. Functionally, catalyzes the condensation of (S)-aspartate-beta-semialdehyde [(S)-ASA] and pyruvate to 4-hydroxy-tetrahydrodipicolinate (HTPA). The polypeptide is 4-hydroxy-tetrahydrodipicolinate synthase (Rhizorhabdus wittichii (strain DSM 6014 / CCUG 31198 / JCM 15750 / NBRC 105917 / EY 4224 / RW1) (Sphingomonas wittichii)).